Consider the following 69-residue polypeptide: Putative membrane protein insertion efficiency factor (69 aa).

The protein belongs to the UPF0161 family.

The protein localises to the cell inner membrane. In terms of biological role, could be involved in insertion of integral membrane proteins into the membrane. This chain is Putative membrane protein insertion efficiency factor, found in Geobacter sulfurreducens (strain ATCC 51573 / DSM 12127 / PCA).